The following is a 155-amino-acid chain: Perlucin (155 aa).

Intrachain disulfides connect Cys2/Cys13, Cys30/Cys127, and Cys102/Cys119. A C-type lectin domain is found at 9 to 128 (NRRSCYWFST…CQKPSHFICE (120 aa)). N-linked (GlcNAc...) asparagine glycosylation occurs at Asn84. 2 repeat units span residues 136–145 (NSLHANLQQR) and 146–155 (DSLHANLQQR).

In terms of processing, glycosylated.

In terms of biological role, may promote nucleation and/or growth of calcium carbonate crystals. Binds to D-galactose and D-mannose/D-glucose. This is Perlucin from Haliotis laevigata (Smooth Australian abalone).